We begin with the raw amino-acid sequence, 356 residues long: S-adenosylmethionine:tRNA ribosyltransferase-isomerase (356 aa).

The protein belongs to the QueA family. Monomer.

Its subcellular location is the cytoplasm. The catalysed reaction is 7-aminomethyl-7-carbaguanosine(34) in tRNA + S-adenosyl-L-methionine = epoxyqueuosine(34) in tRNA + adenine + L-methionine + 2 H(+). It participates in tRNA modification; tRNA-queuosine biosynthesis. Transfers and isomerizes the ribose moiety from AdoMet to the 7-aminomethyl group of 7-deazaguanine (preQ1-tRNA) to give epoxyqueuosine (oQ-tRNA). This chain is S-adenosylmethionine:tRNA ribosyltransferase-isomerase, found in Salmonella arizonae (strain ATCC BAA-731 / CDC346-86 / RSK2980).